We begin with the raw amino-acid sequence, 128 residues long: Large ribosomal subunit protein uL22 (128 aa).

The protein belongs to the universal ribosomal protein uL22 family. Part of the 50S ribosomal subunit.

Functionally, this protein binds specifically to 23S rRNA; its binding is stimulated by other ribosomal proteins, e.g. L4, L17, and L20. It is important during the early stages of 50S assembly. It makes multiple contacts with different domains of the 23S rRNA in the assembled 50S subunit and ribosome. Its function is as follows. The globular domain of the protein is located near the polypeptide exit tunnel on the outside of the subunit, while an extended beta-hairpin is found that lines the wall of the exit tunnel in the center of the 70S ribosome. The polypeptide is Large ribosomal subunit protein uL22 (Prochlorococcus marinus subsp. pastoris (strain CCMP1986 / NIES-2087 / MED4)).